Consider the following 323-residue polypeptide: tRNA dimethylallyltransferase (323 aa).

ATP is bound at residue 12–19 (GPTAAGKT). 14-19 (TAAGKT) is a substrate binding site. 2 interaction with substrate tRNA regions span residues 37–40 (DSAL) and 161–165 (QRLIR).

The protein belongs to the IPP transferase family. Monomer. It depends on Mg(2+) as a cofactor.

It carries out the reaction adenosine(37) in tRNA + dimethylallyl diphosphate = N(6)-dimethylallyladenosine(37) in tRNA + diphosphate. Catalyzes the transfer of a dimethylallyl group onto the adenine at position 37 in tRNAs that read codons beginning with uridine, leading to the formation of N6-(dimethylallyl)adenosine (i(6)A). The protein is tRNA dimethylallyltransferase of Pseudomonas syringae pv. syringae (strain B728a).